A 321-amino-acid polypeptide reads, in one-letter code: PI-PLC X domain-containing protein 3 (321 aa).

Positions 22–197 (SIHSIPLTNL…DYQVLVFYHS (176 aa)) constitute a PI-PLC X-box domain. Catalysis depends on residues His-37 and His-114.

As to expression, widely expressed, with highest levels in brain, followed by heart atrium. Not detected in small intestine, nor stomach.

It is found in the cytoplasm. In Mus musculus (Mouse), this protein is PI-PLC X domain-containing protein 3 (Plcxd3).